A 262-amino-acid chain; its full sequence is Shikimate dehydrogenase (NADP(+)) (262 aa).

Residues S15–S17 and T62 contribute to the shikimate site. Catalysis depends on K66, which acts as the Proton acceptor. E78 is a binding site for NADP(+). N87 and D102 together coordinate shikimate. Residues G126–A130, N150–R155, and M214 contribute to the NADP(+) site. Y216 contributes to the shikimate binding site. G236 contributes to the NADP(+) binding site.

This sequence belongs to the shikimate dehydrogenase family. Homodimer.

It carries out the reaction shikimate + NADP(+) = 3-dehydroshikimate + NADPH + H(+). It participates in metabolic intermediate biosynthesis; chorismate biosynthesis; chorismate from D-erythrose 4-phosphate and phosphoenolpyruvate: step 4/7. Functionally, involved in the biosynthesis of the chorismate, which leads to the biosynthesis of aromatic amino acids. Catalyzes the reversible NADPH linked reduction of 3-dehydroshikimate (DHSA) to yield shikimate (SA). The polypeptide is Shikimate dehydrogenase (NADP(+)) (Acinetobacter baylyi (strain ATCC 33305 / BD413 / ADP1)).